The chain runs to 298 residues: Serine/threonine-protein kinase 1 (298 aa).

The region spanning 38–276 is the Protein kinase domain; that stretch reads FIATRPMFEG…FKSLVSHPWF (239 aa). ATP contacts are provided by residues 45–53 and Lys-65; that span reads FEGGRNNVF. Catalysis depends on Asp-152, which acts as the Proton acceptor.

Belongs to the protein kinase superfamily. Ser/Thr protein kinase family.

Its subcellular location is the virion. The protein resides in the host cytoplasm. It catalyses the reaction L-seryl-[protein] + ATP = O-phospho-L-seryl-[protein] + ADP + H(+). It carries out the reaction L-threonyl-[protein] + ATP = O-phospho-L-threonyl-[protein] + ADP + H(+). Essential for viral replication. It may mediate the virus' progression through DNA replication. The sequence is that of Serine/threonine-protein kinase 1 from Ornithodoros (relapsing fever ticks).